The sequence spans 369 residues: MIKLKQLIAATLLLSAAFGAHAERLKDIASISGVRANQLIGYGLVVGLNGTGDQTTQTPFTLQTFNNMLSQFGIKVPAGSGTVQLKNVAAVAVYADLPAFAKPGQTVDITVSSIGNSKSLRGGALLMTPMKGVDGNVYAIAQGNLVVGGFDAEGRDGSKITVNVPSSGRIPGGASVERSVPSGFNQGNTLTLNLNRSDFTTAKRVVDKINELLGPGVAQALDGGSVRVTAPLDPGQRVDYLSILENLEVDPGQTAAKVIINSRTGTIVIGQNVKVSPAAVTHGSLTVTITEDPIVSQPGALSGGQTAVVPRSRVNAQQELHPMFKFGPGTTLDEIVRAVNQVGAAPGDLMAILEALKQAGALQADLIVI.

The first 22 residues, 1–22 (MIKLKQLIAATLLLSAAFGAHA), serve as a signal peptide directing secretion.

It belongs to the FlgI family. As to quaternary structure, the basal body constitutes a major portion of the flagellar organelle and consists of four rings (L,P,S, and M) mounted on a central rod.

Its subcellular location is the periplasm. It localises to the bacterial flagellum basal body. In terms of biological role, assembles around the rod to form the L-ring and probably protects the motor/basal body from shearing forces during rotation. In Pseudomonas syringae pv. tomato (strain ATCC BAA-871 / DC3000), this protein is Flagellar P-ring protein.